Here is a 545-residue protein sequence, read N- to C-terminus: Chaperonin GroEL (545 aa).

Residues 30–33, Lys51, 87–91, Gly415, and Asp495 each bind ATP; these read TLGP and DGTTT.

It belongs to the chaperonin (HSP60) family. Forms a cylinder of 14 subunits composed of two heptameric rings stacked back-to-back. Interacts with the co-chaperonin GroES.

It is found in the cytoplasm. The catalysed reaction is ATP + H2O + a folded polypeptide = ADP + phosphate + an unfolded polypeptide.. Together with its co-chaperonin GroES, plays an essential role in assisting protein folding. The GroEL-GroES system forms a nano-cage that allows encapsulation of the non-native substrate proteins and provides a physical environment optimized to promote and accelerate protein folding. The chain is Chaperonin GroEL from Yersinia pestis bv. Antiqua (strain Antiqua).